Here is a 122-residue protein sequence, read N- to C-terminus: Urease subunit beta (122 aa).

Residues 92–122 form a disordered region; it reads GLRPEYAGELDGRGHEPTAPNYGEKGQGHFE.

Belongs to the urease beta subunit family. Heterotrimer of UreA (gamma), UreB (beta) and UreC (alpha) subunits. Three heterotrimers associate to form the active enzyme.

Its subcellular location is the cytoplasm. The enzyme catalyses urea + 2 H2O + H(+) = hydrogencarbonate + 2 NH4(+). It functions in the pathway nitrogen metabolism; urea degradation; CO(2) and NH(3) from urea (urease route): step 1/1. This is Urease subunit beta from Saccharopolyspora erythraea (strain ATCC 11635 / DSM 40517 / JCM 4748 / NBRC 13426 / NCIMB 8594 / NRRL 2338).